The sequence spans 376 residues: Alanine racemase (376 aa).

Catalysis depends on Lys36, which acts as the Proton acceptor; specific for D-alanine. Residue Lys36 is modified to N6-(pyridoxal phosphate)lysine. Arg134 is a binding site for substrate. The Proton acceptor; specific for L-alanine role is filled by Tyr266. Met314 is a substrate binding site.

The protein belongs to the alanine racemase family. Requires pyridoxal 5'-phosphate as cofactor.

The catalysed reaction is L-alanine = D-alanine. Its pathway is amino-acid biosynthesis; D-alanine biosynthesis; D-alanine from L-alanine: step 1/1. In terms of biological role, catalyzes the interconversion of L-alanine and D-alanine. May also act on other amino acids. The chain is Alanine racemase (alr) from Nitratidesulfovibrio vulgaris (strain DP4) (Desulfovibrio vulgaris).